Consider the following 808-residue polypeptide: uncharacterized protein (808 aa).

35-42 contributes to the ATP binding site; sequence GPNNVGKT.

This is an uncharacterized protein from Methanocaldococcus jannaschii (strain ATCC 43067 / DSM 2661 / JAL-1 / JCM 10045 / NBRC 100440) (Methanococcus jannaschii).